A 149-amino-acid chain; its full sequence is MEQSFIMIKPDGVQRGLIGDIISRFEKKGFFLRGMKFMNVERSFAQQHYADLSDKPFFPGLVEYIISGPVVAMVWEGKDVVATGRRIIGATRPWEAAPGTIRADYAVEVGRNVIHGSDSVDNGKKEIALWFPEGLAEWRSNLHPWIYES.

Residues K9, F57, R85, T91, R102, and N112 each contribute to the ATP site. H115 functions as the Pros-phosphohistidine intermediate in the catalytic mechanism.

Homohexamer. Mg(2+) serves as cofactor.

The catalysed reaction is a 2'-deoxyribonucleoside 5'-diphosphate + ATP = a 2'-deoxyribonucleoside 5'-triphosphate + ADP. It carries out the reaction a ribonucleoside 5'-diphosphate + ATP = a ribonucleoside 5'-triphosphate + ADP. Functionally, major role in the synthesis of nucleoside triphosphates other than ATP. The ATP gamma phosphate is transferred to the NDP beta phosphate via a ping-pong mechanism, using a phosphorylated active-site intermediate. This NDK is microtubule-associated. This Oryza sativa subsp. indica (Rice) protein is Nucleoside diphosphate kinase 1 (NDKR).